A 347-amino-acid polypeptide reads, in one-letter code: NADH-ubiquinone oxidoreductase chain 2 (347 aa).

10 helical membrane-spanning segments follow: residues 3–23, 25–45, 59–79, 96–116, 148–170, 178–198, 200–220, 247–267, 276–296, and 326–346; these read PLIL…VMMS, HWLM…PLLM, YFLT…INLL, IIMT…FWVP, GINL…WGGL, ILAY…AFNP, MTLL…MLFM, IMLS…WMII, ITLA…YMRL, and LPML…ITLL.

This sequence belongs to the complex I subunit 2 family. Core subunit of respiratory chain NADH dehydrogenase (Complex I) which is composed of 45 different subunits. Interacts with TMEM242.

The protein localises to the mitochondrion inner membrane. The catalysed reaction is a ubiquinone + NADH + 5 H(+)(in) = a ubiquinol + NAD(+) + 4 H(+)(out). Core subunit of the mitochondrial membrane respiratory chain NADH dehydrogenase (Complex I) which catalyzes electron transfer from NADH through the respiratory chain, using ubiquinone as an electron acceptor. Essential for the catalytic activity and assembly of complex I. The polypeptide is NADH-ubiquinone oxidoreductase chain 2 (Saccopteryx leptura (Lesser sac-winged bat)).